The sequence spans 536 residues: Phosphoenolpyruvate carboxykinase (ATP) (536 aa).

Arg-61, Tyr-195, and Lys-201 together coordinate substrate. ATP contacts are provided by residues Lys-201, His-220, and 236-244; that span reads GLSGTGKTT. Mn(2+)-binding residues include Lys-201 and His-220. Mn(2+) is bound at residue Asp-257. Residues Glu-285, Arg-322, and Thr-447 each contribute to the ATP site. Substrate is bound at residue Arg-322.

This sequence belongs to the phosphoenolpyruvate carboxykinase (ATP) family. The cofactor is Mn(2+).

The protein resides in the cytoplasm. It carries out the reaction oxaloacetate + ATP = phosphoenolpyruvate + ADP + CO2. The protein operates within carbohydrate biosynthesis; gluconeogenesis. Functionally, involved in the gluconeogenesis. Catalyzes the conversion of oxaloacetate (OAA) to phosphoenolpyruvate (PEP) through direct phosphoryl transfer between the nucleoside triphosphate and OAA. The polypeptide is Phosphoenolpyruvate carboxykinase (ATP) (Rhizobium etli (strain CIAT 652)).